We begin with the raw amino-acid sequence, 572 residues long: Cuticlin-6 (572 aa).

Positions 1-24 (MRPIPYDISLSITSFLSLILICSA) are cleaved as a signal peptide. Topologically, residues 25-541 (NPIDNGLVDS…PLPYPLINTN (517 aa)) are extracellular. Positions 47–216 (EVILLLDASG…QLDRALADSL (170 aa)) constitute a VWFA domain. N78 carries an N-linked (GlcNAc...) asparagine glycan. The region spanning 233 to 479 (ICGPDRIGVK…GGCEGITPPQ (247 aa)) is the ZP domain. The chain crosses the membrane as a helical span at residues 542-562 (LWIMGIITLTNIFVFILTVWF). The Cytoplasmic segment spans residues 563–572 (TFRKRRCKPA).

The protein localises to the cell membrane. Functionally, plays a role in alae formation in dauer larvae probably by regulating cuticle assembly. The chain is Cuticlin-6 from Caenorhabditis elegans.